A 252-amino-acid chain; its full sequence is E3 ubiquitin-protein ligase MARCHF3 (252 aa).

The segment at 62-122 (SSFNDHPMCR…ELCHFRFSVE (61 aa)) adopts an RING-CH-type zinc-finger fold. Positions 70, 73, 86, 88, 96, 99, 112, and 115 each coordinate Zn(2+). The next 2 helical transmembrane spans lie at 144-164 (LFGD…SGWL) and 181-201 (AVGL…WTLV).

It is found in the cytoplasmic vesicle membrane. The protein resides in the early endosome membrane. It carries out the reaction S-ubiquitinyl-[E2 ubiquitin-conjugating enzyme]-L-cysteine + [acceptor protein]-L-lysine = [E2 ubiquitin-conjugating enzyme]-L-cysteine + N(6)-ubiquitinyl-[acceptor protein]-L-lysine.. The protein operates within protein modification; protein ubiquitination. E3 ubiquitin-protein ligase which may be involved in endosomal trafficking. E3 ubiquitin ligases accept ubiquitin from an E2 ubiquitin-conjugating enzyme in the form of a thioester and then directly transfer the ubiquitin to targeted substrates. The polypeptide is E3 ubiquitin-protein ligase MARCHF3 (marchf3) (Xenopus laevis (African clawed frog)).